The primary structure comprises 211 residues: Large ribosomal subunit protein uL3 (211 aa).

The protein belongs to the universal ribosomal protein uL3 family. As to quaternary structure, part of the 50S ribosomal subunit. Forms a cluster with proteins L14 and L19.

In terms of biological role, one of the primary rRNA binding proteins, it binds directly near the 3'-end of the 23S rRNA, where it nucleates assembly of the 50S subunit. The polypeptide is Large ribosomal subunit protein uL3 (Desulfatibacillum aliphaticivorans).